The chain runs to 301 residues: Homoserine O-acetyltransferase (301 aa).

Cys-142 (acyl-thioester intermediate) is an active-site residue. 2 residues coordinate substrate: Lys-163 and Ser-192. The active-site Proton acceptor is His-235. Residue Glu-237 is part of the active site. Arg-249 serves as a coordination point for substrate.

The protein belongs to the MetA family.

It localises to the cytoplasm. The catalysed reaction is L-homoserine + acetyl-CoA = O-acetyl-L-homoserine + CoA. Its pathway is amino-acid biosynthesis; L-methionine biosynthesis via de novo pathway; O-acetyl-L-homoserine from L-homoserine: step 1/1. Transfers an acetyl group from acetyl-CoA to L-homoserine, forming acetyl-L-homoserine. The protein is Homoserine O-acetyltransferase of Novosphingobium aromaticivorans (strain ATCC 700278 / DSM 12444 / CCUG 56034 / CIP 105152 / NBRC 16084 / F199).